A 484-amino-acid polypeptide reads, in one-letter code: tRNA-2-methylthio-N(6)-dimethylallyladenosine synthase (484 aa).

The 118-residue stretch at 36–153 (GKLYIKTHGC…LPELIRARRE (118 aa)) folds into the MTTase N-terminal domain. [4Fe-4S] cluster-binding residues include C45, C82, C116, C190, C194, and C197. Positions 176 to 415 (RAEGPSAFVS…HINAHAASIS (240 aa)) constitute a Radical SAM core domain. Positions 416-479 (QSMVGSVQRV…SNSLRGRIQL (64 aa)) constitute a TRAM domain. The segment at 428–450 (EGPSRRDPNELTGKSENMRPVNF) is disordered.

This sequence belongs to the methylthiotransferase family. MiaB subfamily. As to quaternary structure, monomer. [4Fe-4S] cluster is required as a cofactor.

The protein resides in the cytoplasm. The enzyme catalyses N(6)-dimethylallyladenosine(37) in tRNA + (sulfur carrier)-SH + AH2 + 2 S-adenosyl-L-methionine = 2-methylsulfanyl-N(6)-dimethylallyladenosine(37) in tRNA + (sulfur carrier)-H + 5'-deoxyadenosine + L-methionine + A + S-adenosyl-L-homocysteine + 2 H(+). Functionally, catalyzes the methylthiolation of N6-(dimethylallyl)adenosine (i(6)A), leading to the formation of 2-methylthio-N6-(dimethylallyl)adenosine (ms(2)i(6)A) at position 37 in tRNAs that read codons beginning with uridine. The protein is tRNA-2-methylthio-N(6)-dimethylallyladenosine synthase of Xanthomonas axonopodis pv. citri (strain 306).